A 284-amino-acid chain; its full sequence is MSMLPSFGFTQEQVACVCEVLQQGGNLERLGRFLWSLPACDHLHKNESVLKAKAVVAFHRGNFRELYKILESHQFSPHNHPKLQQLWLKAHYVEAEKLRGRPLGAVGKYRVRRKFPLPRTIWDGEETSYCFKEKSRGVLREWYAHNPYPSPREKRELAEATGLTTTQVSNWFKNRRQRDRAAEAKERENTENNNSSSNKQNQLSPLEGGKPLMSSSEEEFSPPQSPDQNSVLLLQGNMGHARSSNYSLPGLTASQPSHGLQAHQHQLQDSLLGPLTSSLVDLGS.

Residues 124–183 constitute a DNA-binding region (homeobox); that stretch reads GEETSYCFKEKSRGVLREWYAHNPYPSPREKRELAEATGLTTTQVSNWFKNRRQRDRAAE. Residues 168–271 are disordered; sequence VSNWFKNRRQ…AHQHQLQDSL (104 aa). Basic and acidic residues predominate over residues 179–190; that stretch reads DRAAEAKERENT. The span at 242-271 shows a compositional bias: polar residues; it reads RSSNYSLPGLTASQPSHGLQAHQHQLQDSL.

The protein belongs to the SIX/Sine oculis homeobox family. In terms of assembly, interacts with DACH1. Interacts with EYA1. Interacts with EYA2. Interacts with CDH1. Interacts with TBX18. Interacts with CEBPA. Interacts with CEBPB. Interacts with EBF2. In terms of processing, phosphorylated during interphase; becomes hyperphosphorylated during mitosis. Hyperphosphorylation impairs binding to promoter elements. Ubiquitinated by the anaphase promoting complex (APC), leading to its proteasomal degradation.

Its subcellular location is the nucleus. It localises to the cytoplasm. Transcription factor that is involved in the regulation of cell proliferation, apoptosis and embryonic development. Plays an important role in the development of several organs, including kidney, muscle and inner ear. Depending on context, functions as a transcriptional repressor or activator. Lacks an activation domain, and requires interaction with EYA family members for transcription activation. Mediates nuclear translocation of EYA1 and EYA2. Binds the 5'-TCA[AG][AG]TTNC-3' motif present in the MEF3 element in the MYOG promoter and CIDEA enhancer. Regulates the expression of numerous genes, including MYC, CCNA1, CCND1 and EZR. Acts as an activator of the IGFBP5 promoter, probably coactivated by EYA2. Repression of precursor cell proliferation in myoblasts is switched to activation through recruitment of EYA3 to the SIX1-DACH1 complex. During myogenesis, seems to act together with EYA2 and DACH2. Regulates the expression of CCNA1. Promotes brown adipocyte differentiation. The polypeptide is Homeobox protein SIX1 (SIX1) (Lagothrix lagotricha (Brown woolly monkey)).